The sequence spans 374 residues: WW domain-binding protein 4 (374 aa).

The segment at 11–42 (KFCDYCKCWIADNRPSVEFHERGKNHKENVAR) adopts a Matrin-type zinc-finger fold. Residues 91 to 109 (EPTISPVTNTVQPTPTANQ) are compositionally biased toward polar residues. Disordered stretches follow at residues 91–126 (EPTI…SKGR) and 188–328 (SKWE…EAGA). The segment covering 112–121 (EKKKKKKKKE) has biased composition (basic residues). WW domains are found at residues 121–154 (EASK…KPEG) and 162–195 (TAAK…KPDD). Basic and acidic residues-rich tracts occupy residues 188-197 (SKWEKPDDFI) and 205-270 (SSKD…EKTT). Residues serine 219, serine 226, and serine 228 each carry the phosphoserine modification. The segment covering 315-325 (STENECLSSSE) has biased composition (polar residues). Residues 355–373 (KKRRIENGKSRNLRQRGED) form an interaction with SNRNP200 region.

In terms of assembly, component of the spliceosome B complex. Associated with U2 snRNPs. Binds splicing factors SNRPB, SNRPC and SF1. Interacts via the WW domains with the Pro-rich domains of KHDRBS1/SAM68. Interacts via the WW domains with the Pro-rich domains of WBP11. Interacts with SNRNP200.

It is found in the nucleus. It localises to the nucleus speckle. In terms of biological role, involved in pre-mRNA splicing as a component of the spliceosome. May play a role in cross-intron bridging of U1 and U2 snRNPs in the mammalian A complex. The sequence is that of WW domain-binding protein 4 (Wbp4) from Rattus norvegicus (Rat).